A 941-amino-acid polypeptide reads, in one-letter code: Pre-mRNA-processing factor 6 (941 aa).

Positions 1 to 79 are disordered; the sequence is MNKKKKPFLG…DEDLNDTNYD (79 aa). A compositionally biased stretch (basic and acidic residues) spans 39-65; that stretch reads DANDPVDDRHAPPGKRTVGDQMKKNQA. Acidic residues predominate over residues 66–78; it reads ADDDDEDLNDTNY. A Phosphoserine modification is found at Ser-143. A phosphothreonine mark is found at Thr-180, Thr-266, and Thr-275. The residue at position 279 (Ser-279) is a Phosphoserine. HAT repeat units lie at residues 384 to 416, 418 to 444, 445 to 476, 554 to 586, 588 to 620, 622 to 654, 689 to 721, 723 to 755, and 855 to 887; these read TDIR…LEEP, DARI…ARLE, TYEN…LEEA, NALE…FGKN, GTRE…SKWL, GDVP…LESE, DNIR…IEEQ, EMME…LEEK, and RKIT…FELQ.

In terms of assembly, identified in the spliceosome B complex. Identified in the spliceosome C complex. Associates with the U5 snRNP particle. Component of the U4/U6-U5 tri-snRNP complex composed of the U4, U6 and U5 snRNAs and at least PRPF3, PRPF4, PRPF6, PRPF8, PRPF31, SNRNP200, TXNL4A, SNRNP40, DDX23, CD2BP2, PPIH, SNU13, EFTUD2, SART1 and USP39, LSm proteins LSm2-8 and Sm proteins. Interacts with ARAF1. Interacts with AR and NR3C1, but not ESR1, independently of the presence of hormones. Interacts with USH1G. Post-translationally, phosphorylated by PRP4K during spliceosome assembly.

Its subcellular location is the nucleus. It is found in the nucleoplasm. It localises to the nucleus speckle. Functionally, involved in pre-mRNA splicing as component of the U4/U6-U5 tri-snRNP complex, one of the building blocks of the spliceosome. Enhances dihydrotestosterone-induced transactivation activity of AR, as well as dexamethasone-induced transactivation activity of NR3C1, but does not affect estrogen-induced transactivation. The chain is Pre-mRNA-processing factor 6 (PRPF6) from Pongo abelii (Sumatran orangutan).